Here is a 122-residue protein sequence, read N- to C-terminus: Histone H2B.2 (122 aa).

A compositionally biased stretch (low complexity) spans 1 to 10; it reads MAPKKAPAAT. Residues 1–28 form a disordered region; sequence MAPKKAPAATTEKKVKKAPTTEKKNKKK. At alanine 2 the chain carries N,N,N-trimethylalanine. N6-acetyllysine is present on residues lysine 5 and lysine 42. Lysine 116 is covalently cross-linked (Glycyl lysine isopeptide (Lys-Gly) (interchain with G-Cter in ubiquitin)).

Belongs to the histone H2B family. In terms of assembly, the nucleosome is a histone octamer containing two molecules each of H2A, H2B, H3 and H4 assembled in one H3-H4 heterotetramer and two H2A-H2B heterodimers. The octamer wraps approximately 147 bp of DNA. Post-translationally, acetylation occurs almost exclusively in the MAC. Monoubiquitination to form H2BK115ub1 gives a specific tag for epigenetic transcriptional activation and is also prerequisite for H3K4me and H3K79me formation.

It is found in the nucleus. The protein localises to the chromosome. Core component of nucleosome. Nucleosomes wrap and compact DNA into chromatin, limiting DNA accessibility to the cellular machineries which require DNA as a template. Histones thereby play a central role in transcription regulation, DNA repair, DNA replication and chromosomal stability. DNA accessibility is regulated via a complex set of post-translational modifications of histones, also called histone code, and nucleosome remodeling. In Tetrahymena thermophila (strain SB210), this protein is Histone H2B.2 (HTB2).